The following is a 459-amino-acid chain: Ribulose bisphosphate carboxylase large chain (459 aa).

Lys4 is modified (N6,N6,N6-trimethyllysine). Substrate-binding residues include Asn113 and Thr163. Lys165 (proton acceptor) is an active-site residue. Lys167 is a substrate binding site. Mg(2+) is bound by residues Lys191, Asp193, and Glu194. Position 191 is an N6-carboxylysine (Lys191). Residue His284 is the Proton acceptor of the active site. Residues Arg285, His317, and Ser369 each coordinate substrate.

This sequence belongs to the RuBisCO large chain family. Type I subfamily. As to quaternary structure, heterohexadecamer of 8 large chains and 8 small chains; disulfide-linked. The disulfide link is formed within the large subunit homodimers. Mg(2+) is required as a cofactor. The disulfide bond which can form in the large chain dimeric partners within the hexadecamer appears to be associated with oxidative stress and protein turnover.

The protein localises to the plastid. It is found in the chloroplast. The enzyme catalyses 2 (2R)-3-phosphoglycerate + 2 H(+) = D-ribulose 1,5-bisphosphate + CO2 + H2O. It catalyses the reaction D-ribulose 1,5-bisphosphate + O2 = 2-phosphoglycolate + (2R)-3-phosphoglycerate + 2 H(+). RuBisCO catalyzes two reactions: the carboxylation of D-ribulose 1,5-bisphosphate, the primary event in carbon dioxide fixation, as well as the oxidative fragmentation of the pentose substrate in the photorespiration process. Both reactions occur simultaneously and in competition at the same active site. This is Ribulose bisphosphate carboxylase large chain from Nyssa ogeche (Ogeechee tupelo).